Consider the following 261-residue polypeptide: tRNA pseudouridine synthase A (261 aa).

Asp51 serves as the catalytic Nucleophile. Residue Tyr109 coordinates substrate.

This sequence belongs to the tRNA pseudouridine synthase TruA family. Homodimer.

The enzyme catalyses uridine(38/39/40) in tRNA = pseudouridine(38/39/40) in tRNA. Its function is as follows. Formation of pseudouridine at positions 38, 39 and 40 in the anticodon stem and loop of transfer RNAs. This Shewanella sp. (strain MR-7) protein is tRNA pseudouridine synthase A.